The primary structure comprises 82 residues: DNA-directed RNA polymerase subunit Rpo5 (82 aa).

It belongs to the archaeal Rpo5/eukaryotic RPB5 RNA polymerase subunit family. In terms of assembly, part of the RNA polymerase complex.

Its subcellular location is the cytoplasm. It catalyses the reaction RNA(n) + a ribonucleoside 5'-triphosphate = RNA(n+1) + diphosphate. In terms of biological role, DNA-dependent RNA polymerase (RNAP) catalyzes the transcription of DNA into RNA using the four ribonucleoside triphosphates as substrates. The polypeptide is DNA-directed RNA polymerase subunit Rpo5 (Thermococcus onnurineus (strain NA1)).